A 290-amino-acid polypeptide reads, in one-letter code: GTPase Era (290 aa).

Residues 2–169 (KSGFVSIIGR…KDKIYENLQE (168 aa)) enclose the Era-type G domain. Positions 10–17 (GRPSTGKS) are G1. Position 10 to 17 (10 to 17 (GRPSTGKS)) interacts with GTP. A G2 region spans residues 36–40 (QTTRN). Residues 57 to 60 (DTPG) form a G3 region. GTP-binding positions include 57-61 (DTPGF) and 119-122 (NKID). Residues 119–122 (NKID) are G4. A G5 region spans residues 148–150 (ISA). In terms of domain architecture, KH type-2 spans 200-276 (LKEELPYSLY…DLFLQVKLRK (77 aa)).

It belongs to the TRAFAC class TrmE-Era-EngA-EngB-Septin-like GTPase superfamily. Era GTPase family. In terms of assembly, monomer.

Its subcellular location is the cytoplasm. The protein localises to the cell inner membrane. Functionally, an essential GTPase that binds both GDP and GTP, with rapid nucleotide exchange. Plays a role in 16S rRNA processing and 30S ribosomal subunit biogenesis and possibly also in cell cycle regulation and energy metabolism. This chain is GTPase Era, found in Borrelia turicatae (strain 91E135).